Here is a 504-residue protein sequence, read N- to C-terminus: Maturase K (504 aa).

The protein belongs to the intron maturase 2 family. MatK subfamily.

It is found in the plastid. Its subcellular location is the chloroplast. In terms of biological role, usually encoded in the trnK tRNA gene intron. Probably assists in splicing its own and other chloroplast group II introns. This Cynophalla hastata (Broadleaf caper) protein is Maturase K.